Reading from the N-terminus, the 476-residue chain is Cardiolipin synthase (476 aa).

2 helical membrane-spanning segments follow: residues 2–22 (HLFI…IIFI) and 31–51 (WAWI…YILF). PLD phosphodiesterase domains follow at residues 207-234 (INYR…GDEY) and 389-416 (EKGF…DIRS). Residues H212, K214, D219, H394, K396, and D401 contribute to the active site.

The protein belongs to the phospholipase D family. Cardiolipin synthase subfamily.

It is found in the cell membrane. It carries out the reaction 2 a 1,2-diacyl-sn-glycero-3-phospho-(1'-sn-glycerol) = a cardiolipin + glycerol. Its function is as follows. Catalyzes the reversible phosphatidyl group transfer from one phosphatidylglycerol molecule to another to form cardiolipin (CL) (diphosphatidylglycerol) and glycerol. The chain is Cardiolipin synthase (cls) from Clostridium perfringens (strain 13 / Type A).